The primary structure comprises 187 residues: Large ribosomal subunit protein uL6 (187 aa).

The protein belongs to the universal ribosomal protein uL6 family. As to quaternary structure, part of the 50S ribosomal subunit.

Functionally, this protein binds to the 23S rRNA, and is important in its secondary structure. It is located near the subunit interface in the base of the L7/L12 stalk, and near the tRNA binding site of the peptidyltransferase center. The sequence is that of Large ribosomal subunit protein uL6 from Roseiflexus sp. (strain RS-1).